The sequence spans 264 residues: MKTYLQLLEHILQHGVEKSDRTGTGTLSVFGYQMRFDLAKGFPLVTTKKLHTRSIVHELLWFLRGDTNISYLKENGVTIWDEWADNNGDLGPVYGKQWRSWPTADGGTIDQLSDVVQQIKSNPDSRRLIVSAWNVGELDKMALMPCHALFQFYVANNKLSCQLYQRSADVFLGVPFNIASYSLLTHMVAQQCNLDVAEFIWTGGDCHLYLNHLEQAQTQLTREPLPLPSLAIKRKPASLFDYAYEDFEFVNYQSHPAIKAPIAV.

Arg-21 contacts dUMP. His-51 lines the (6R)-5,10-methylene-5,6,7,8-tetrahydrofolate pocket. DUMP is bound at residue Arg-126–Arg-127. The active-site Nucleophile is Cys-146. DUMP contacts are provided by residues Arg-166–Asp-169, Asn-177, and His-207–Tyr-209. Residue Asp-169 coordinates (6R)-5,10-methylene-5,6,7,8-tetrahydrofolate. (6R)-5,10-methylene-5,6,7,8-tetrahydrofolate is bound at residue Ala-263.

This sequence belongs to the thymidylate synthase family. Bacterial-type ThyA subfamily. As to quaternary structure, homodimer.

It localises to the cytoplasm. The catalysed reaction is dUMP + (6R)-5,10-methylene-5,6,7,8-tetrahydrofolate = 7,8-dihydrofolate + dTMP. It participates in pyrimidine metabolism; dTTP biosynthesis. Functionally, catalyzes the reductive methylation of 2'-deoxyuridine-5'-monophosphate (dUMP) to 2'-deoxythymidine-5'-monophosphate (dTMP) while utilizing 5,10-methylenetetrahydrofolate (mTHF) as the methyl donor and reductant in the reaction, yielding dihydrofolate (DHF) as a by-product. This enzymatic reaction provides an intracellular de novo source of dTMP, an essential precursor for DNA biosynthesis. This Legionella pneumophila (strain Lens) protein is Thymidylate synthase.